We begin with the raw amino-acid sequence, 219 residues long: uncharacterized protein (219 aa).

The HD domain occupies 57-158 (QLEHMTRAAM…LSEASRQTLL (102 aa)).

This is an uncharacterized protein from Acanthamoeba polyphaga mimivirus (APMV).